Reading from the N-terminus, the 629-residue chain is Hemocyanin F chain (629 aa).

Cu cation-binding residues include His-172, His-176, His-203, His-324, His-328, and His-364. 2 N-linked (GlcNAc...) asparagine glycosylation sites follow: Asn-395 and Asn-447. A compositionally biased stretch (polar residues) spans 503–513 (SESSVTVSHTP). The disordered stretch occupies residues 503 to 522 (SESSVTVSHTPTFEELQRGE). A glycan (N-linked (GlcNAc...) asparagine) is linked at Asn-527. A disulfide bridge connects residues Cys-534 and Cys-582. Asn-615 carries N-linked (GlcNAc...) asparagine glycosylation.

The protein belongs to the tyrosinase family. Hemocyanin subfamily. In terms of assembly, tarantula hemocyanin is a 24-chain polymer with seven different chains identified. As to expression, hemolymph.

Its subcellular location is the secreted. It localises to the extracellular space. In terms of biological role, hemocyanins are copper-containing oxygen carriers occurring freely dissolved in the hemolymph of many mollusks and arthropods. This chain is Hemocyanin F chain (HCF), found in Aphonopelma sp. (American tarantula).